Reading from the N-terminus, the 166-residue chain is Large ribosomal subunit protein uL10 (166 aa).

It belongs to the universal ribosomal protein uL10 family. In terms of assembly, part of the ribosomal stalk of the 50S ribosomal subunit. The N-terminus interacts with L11 and the large rRNA to form the base of the stalk. The C-terminus forms an elongated spine to which L12 dimers bind in a sequential fashion forming a multimeric L10(L12)X complex.

Its function is as follows. Forms part of the ribosomal stalk, playing a central role in the interaction of the ribosome with GTP-bound translation factors. This is Large ribosomal subunit protein uL10 from Pseudomonas putida (strain GB-1).